The chain runs to 307 residues: Pantothenate kinase (307 aa).

Gly-87–Ser-94 contacts ATP.

It belongs to the prokaryotic pantothenate kinase family.

It is found in the cytoplasm. It carries out the reaction (R)-pantothenate + ATP = (R)-4'-phosphopantothenate + ADP + H(+). It functions in the pathway cofactor biosynthesis; coenzyme A biosynthesis; CoA from (R)-pantothenate: step 1/5. This chain is Pantothenate kinase, found in Vibrio vulnificus (strain CMCP6).